Here is an 85-residue protein sequence, read N- to C-terminus: MSWDVIKHPHVTEKAMNDMDFQNKLQFAVDDRASKGEVADAVEEQYDVTVEQVNTQNTMDGEKKAVVRLSEDDDAQEVASRIGVF.

The protein belongs to the universal ribosomal protein uL23 family. Part of the 50S ribosomal subunit. Interacts with protein L29 and weakly with protein L39e.

Its function is as follows. Binds to a specific region on the 23S rRNA. Located at the polypeptide exit tunnel on the outside of the subunit. This Haloarcula marismortui (strain ATCC 43049 / DSM 3752 / JCM 8966 / VKM B-1809) (Halobacterium marismortui) protein is Large ribosomal subunit protein uL23.